Reading from the N-terminus, the 381-residue chain is L-lactate dehydrogenase (381 aa).

An FMN hydroxy acid dehydrogenase domain is found at 1-380 (MIISASTDYR…SRDSLVRELG (380 aa)). Residue Y24 coordinates substrate. Positions 106 and 127 each coordinate FMN. Y129 contacts substrate. FMN is bound at residue T155. R164 is a substrate binding site. K251 serves as a coordination point for FMN. H275 (proton acceptor) is an active-site residue. A substrate-binding site is contributed by R278. 306 to 330 (DSGIRSGLDVVRMIALGADTVLIGR) is a binding site for FMN.

Belongs to the FMN-dependent alpha-hydroxy acid dehydrogenase family. As to quaternary structure, homotetramer. The cofactor is FMN.

It localises to the cell inner membrane. It carries out the reaction (S)-lactate + A = pyruvate + AH2. In terms of biological role, catalyzes the conversion of L-lactate to pyruvate. Is coupled to the respiratory chain. The polypeptide is L-lactate dehydrogenase (Pseudomonas putida (strain W619)).